The chain runs to 439 residues: UDP-N-acetylglucosamine--N-acetylmuramyl-(pentapeptide) pyrophosphoryl-undecaprenol N-acetylglucosamine transferase (439 aa).

UDP-N-acetyl-alpha-D-glucosamine contacts are provided by residues 25-27 (TGG), arginine 218, serine 248, and glutamine 362.

Belongs to the glycosyltransferase 28 family. MurG subfamily.

The protein resides in the cell membrane. It carries out the reaction di-trans,octa-cis-undecaprenyl diphospho-N-acetyl-alpha-D-muramoyl-L-alanyl-D-glutamyl-meso-2,6-diaminopimeloyl-D-alanyl-D-alanine + UDP-N-acetyl-alpha-D-glucosamine = di-trans,octa-cis-undecaprenyl diphospho-[N-acetyl-alpha-D-glucosaminyl-(1-&gt;4)]-N-acetyl-alpha-D-muramoyl-L-alanyl-D-glutamyl-meso-2,6-diaminopimeloyl-D-alanyl-D-alanine + UDP + H(+). It participates in cell wall biogenesis; peptidoglycan biosynthesis. Its function is as follows. Cell wall formation. Catalyzes the transfer of a GlcNAc subunit on undecaprenyl-pyrophosphoryl-MurNAc-pentapeptide (lipid intermediate I) to form undecaprenyl-pyrophosphoryl-MurNAc-(pentapeptide)GlcNAc (lipid intermediate II). This chain is UDP-N-acetylglucosamine--N-acetylmuramyl-(pentapeptide) pyrophosphoryl-undecaprenol N-acetylglucosamine transferase, found in Roseiflexus sp. (strain RS-1).